Consider the following 1060-residue polypeptide: RNA-binding protein 27 (1060 aa).

3 disordered regions span residues 80–143, 160–278, and 319–416; these read PLEP…DGKW, YDWR…PKRR, and PPPG…PPPL. 2 stretches are compositionally biased toward basic and acidic residues: residues 84–102 and 124–143; these read VKPE…KEEV and SRSE…DGKW. The segment covering 165 to 185 has biased composition (basic residues); that stretch reads GRSKSRSKSRGLSRSRSRSRG. Positions 186–211 are enriched in basic and acidic residues; sequence RSKDRDPNRNVEHRERSKFKSERNDL. Low complexity-rich tracts occupy residues 225–235 and 255–268; these read SSEQYSSGAQS and SWSN…SSNS. The segment at 273–301 adopts a C3H1-type zinc-finger fold; the sequence is PPPKRRCRDYDERGFCVLGDLCQFDHGND. 2 stretches are compositionally biased toward pro residues: residues 319–356 and 371–384; these read PPPG…PGPG and QPPP…PRPP. A compositionally biased stretch (polar residues) spans 387–402; sequence QSSLINSRDQPGTSAV. Thr-447 is subject to Phosphothreonine. At Arg-455 the chain carries Omega-N-methylarginine. Residues 572–594 form a disordered region; sequence LTKKPWLGKQGNNNQSKPGFLRK. The RRM domain occupies 600-674; the sequence is TKLEVKKIPQ…RFIRVLWHRE (75 aa). The segment at 754–775 is disordered; sequence HASTNQSDTSHLLNQTGGSSGE. Positions 755–770 are enriched in polar residues; it reads ASTNQSDTSHLLNQTG. Positions 810-887 form a coiled coil; sequence VQEVLKKKQE…KDELKTSSTV (78 aa). A Phosphoserine modification is found at Ser-928. The tract at residues 943-982 is disordered; that stretch reads GRGKTISSQGRGRGRGRGRGRGSLNHMVVDHRPKALPGGG. Phosphoserine is present on residues Ser-1012 and Ser-1020. The disordered stretch occupies residues 1014-1060; that stretch reads HKPKVPSISTETEEEEVKEEETETSDLFLHDDDDEDEDEYESRSWRR. Acidic residues-rich tracts occupy residues 1024 to 1037 and 1044 to 1053; these read ETEE…ETET and DDDDEDEDEY.

It is found in the cytoplasm. The protein resides in the nucleus speckle. Its function is as follows. May be involved in the turnover of nuclear polyadenylated (pA+) RNA. This chain is RNA-binding protein 27, found in Mus musculus (Mouse).